The following is a 589-amino-acid chain: Aspartate--tRNA ligase (589 aa).

Position 175 (glutamate 175) interacts with L-aspartate. The tract at residues 199–202 (QIFK) is aspartate. Arginine 221 is an L-aspartate binding site. ATP contacts are provided by residues 221–223 (RDE) and glutamine 230. Position 449 (histidine 449) interacts with L-aspartate. Glutamate 483 is a binding site for ATP. Arginine 490 contacts L-aspartate. 535–538 (GLDR) contacts ATP.

Belongs to the class-II aminoacyl-tRNA synthetase family. Type 1 subfamily. In terms of assembly, homodimer.

It is found in the cytoplasm. The enzyme catalyses tRNA(Asp) + L-aspartate + ATP = L-aspartyl-tRNA(Asp) + AMP + diphosphate. Catalyzes the attachment of L-aspartate to tRNA(Asp) in a two-step reaction: L-aspartate is first activated by ATP to form Asp-AMP and then transferred to the acceptor end of tRNA(Asp). The chain is Aspartate--tRNA ligase from Shouchella clausii (strain KSM-K16) (Alkalihalobacillus clausii).